The chain runs to 78 residues: Large ribosomal subunit protein bL28 (78 aa).

Positions 1–27 are disordered; the sequence is MSAYCQVTGRKPSFGKSVSHSHRRTNR.

This sequence belongs to the bacterial ribosomal protein bL28 family.

This chain is Large ribosomal subunit protein bL28, found in Corynebacterium kroppenstedtii (strain DSM 44385 / JCM 11950 / CIP 105744 / CCUG 35717).